The following is a 505-amino-acid chain: Chromatin assembly factor 1 subunit FAS2 homolog (505 aa).

7 WD repeats span residues 11–50, 62–101, 110–149, 152–191, 223–268, 278–333, and 337–378; these read HEQQ…SDKK, SHSS…DGEA, FHHK…VQQK, GHLH…KSKN, FHDE…SRRD, GASK…PILI, and LHYA…LPYN. The disordered stretch occupies residues 479–505; it reads VTAPPVSTKNSASSKPTKKRITPIAIN.

The protein belongs to the WD repeat HIR1 family. In terms of assembly, component of the chromatin assembly factor 1 (CAF-1) complex, composed of FSM (FAS1), FAS2 and MSI1.

Its subcellular location is the nucleus. Functionally, component of the chromatin assembly factor complex (CAF-1) involved in chromatin assembly following DNA replication and DNA repair. Required for several aspects of development, including apical meristem maintenance by regulating the durations of the S- and G2-phases of the cell cycle through its chromatin assembly activity. The polypeptide is Chromatin assembly factor 1 subunit FAS2 homolog (FAS2) (Oryza sativa subsp. japonica (Rice)).